A 497-amino-acid polypeptide reads, in one-letter code: Probable cytosol aminopeptidase (497 aa).

Mn(2+) is bound by residues Lys-263 and Asp-268. Lys-275 is an active-site residue. The Mn(2+) site is built by Asp-286, Asp-345, and Glu-347. Residue Arg-349 is part of the active site.

It belongs to the peptidase M17 family. Mn(2+) is required as a cofactor.

The protein resides in the cytoplasm. The catalysed reaction is Release of an N-terminal amino acid, Xaa-|-Yaa-, in which Xaa is preferably Leu, but may be other amino acids including Pro although not Arg or Lys, and Yaa may be Pro. Amino acid amides and methyl esters are also readily hydrolyzed, but rates on arylamides are exceedingly low.. It catalyses the reaction Release of an N-terminal amino acid, preferentially leucine, but not glutamic or aspartic acids.. Presumably involved in the processing and regular turnover of intracellular proteins. Catalyzes the removal of unsubstituted N-terminal amino acids from various peptides. In Sinorhizobium fredii (strain NBRC 101917 / NGR234), this protein is Probable cytosol aminopeptidase.